Reading from the N-terminus, the 203-residue chain is Secreted phosphoprotein 24 (203 aa).

The signal sequence occupies residues 1–23 (MEKMAMKMLVIFVLGMNHWTCTG). 2 disulfide bridges follow: Cys-86-Cys-97 and Cys-110-Cys-128. A Phosphoserine modification is found at Ser-90. Ser-138, Ser-139, Ser-166, and Ser-175 each carry phosphoserine.

This sequence belongs to the SPP2 family. In terms of processing, multiply phosphorylated at serine residues in Ser-X-Glu/Ser(P) sequences, a recognition motif for phosphorylation by secretory pathway protein kinase. Phosphorylation sites are present in the extracellular medium. In terms of tissue distribution, in liver and bone but not in heart, lung, kidney, or spleen.

Its subcellular location is the secreted. Its function is as follows. Could coordinate an aspect of bone turnover. In Bos taurus (Bovine), this protein is Secreted phosphoprotein 24 (SPP2).